Here is a 288-residue protein sequence, read N- to C-terminus: Protoheme IX farnesyltransferase (288 aa).

A run of 9 helical transmembrane segments spans residues 16–36 (VWSLLVFVGVIGAIVAINRFT), 37–57 (LTNILLILIATVSITLGSMGA), 88–108 (VKGLYFGLILMFLSIIILLFF), 111–131 (YLAAVFMAIGLFDNVFIYSYL), 138–158 (WNIILGGFSGGFPVVIGWYTV), 162–182 (FSVLPWFLFALVVIWIPIHVW), 210–230 (AICISSSAVILFIFSIIPVFF), 236–256 (TYMIVATIIAIPMLVYSVLFV), and 265–285 (LKLFIYSSPYLAIIFVLVLIF).

This sequence belongs to the UbiA prenyltransferase family. Protoheme IX farnesyltransferase subfamily.

The protein resides in the cell membrane. The enzyme catalyses heme b + (2E,6E)-farnesyl diphosphate + H2O = Fe(II)-heme o + diphosphate. It participates in porphyrin-containing compound metabolism; heme O biosynthesis; heme O from protoheme: step 1/1. Functionally, converts heme B (protoheme IX) to heme O by substitution of the vinyl group on carbon 2 of heme B porphyrin ring with a hydroxyethyl farnesyl side group. This Thermoplasma volcanium (strain ATCC 51530 / DSM 4299 / JCM 9571 / NBRC 15438 / GSS1) protein is Protoheme IX farnesyltransferase.